Here is a 101-residue protein sequence, read N- to C-terminus: uncharacterized protein (101 aa).

This is an uncharacterized protein from Mycobacterium tuberculosis (strain CDC 1551 / Oshkosh).